The primary structure comprises 565 residues: MAFNFNWSPLMADAGFYTRAQDLLTAALNKSPKPPIIVDDIKVTELNLGSIPPDLEILEVGDLAEDRFRGIFKMSYNGDAFLTLKTRVQANPLNTFLVTRPSFASPKPLAAASGLTIPLQITLSEFRLSGFVVLVFSKQKGITVVFRNDPLESLKVSSTFDSISFVRDYLQKAIEGQLRALFMDELPAIIHRLSLRLWVPEYRDRESESVNTLDLSSESGPGQDPLASPPQDPVDASGNALNPSEVASLSLDSGVEIHNLFSHKNLLRLAALTDSQRTLSLFTPSIKDVVYRAWTASAELGESNTLTSPTSPVLSRTHSHIGSLHSFVDNASTISMQSGGSSNFSGFGSYLRPGRHSRSHTKKRKKRVVDLRRPKTTDDVDSVSGDSVFSSENATSAPTIFSSPAHFSEEKNDDPVTPPLGPQNDLHLPTIHERRRISQGDQTLRRSNLSMSEAAQPSSSRSAQMIAETWPDPDATPRNTIRLPSNDRASNRFTAVSLPSSAIQYTPTVPINNNNPREQVWLSKMAAELARRMQEQKIDPSGSRPFPDFWDDHSREEIPPPAYGH.

An SMP-LTD domain is found at 1-208; sequence MAFNFNWSPL…VPEYRDRESE (208 aa). Residues 209-220 are compositionally biased toward polar residues; it reads SVNTLDLSSESG. Disordered regions lie at residues 209-241, 347-463, and 533-565; these read SVNT…GNAL, FGSY…SRSA, and MQEQ…AYGH. A compositionally biased stretch (basic residues) spans 353 to 367; the sequence is PGRHSRSHTKKRKKR. Over residues 368-378 the composition is skewed to basic and acidic residues; sequence VVDLRRPKTTD. The span at 382 to 391 shows a compositional bias: low complexity; it reads SVSGDSVFSS. Composition is skewed to polar residues over residues 392-402 and 439-463; these read ENATSAPTIFS and QGDQ…SRSA.

It belongs to the MDM34 family. As to quaternary structure, component of the ER-mitochondria encounter structure (ERMES) or MDM complex, composed of mmm1, mdm10, mdm12 and mdm34.

The protein resides in the mitochondrion outer membrane. Component of the ERMES/MDM complex, which serves as a molecular tether to connect the endoplasmic reticulum (ER) and mitochondria. Components of this complex are involved in the control of mitochondrial shape and protein biogenesis, and function in nonvesicular lipid trafficking between the ER and mitochondria. Mdm34 is required for the interaction of the ER-resident membrane protein mmm1 and the outer mitochondrial membrane-resident beta-barrel protein mdm10. This chain is Mitochondrial distribution and morphology protein 34, found in Talaromyces marneffei (strain ATCC 18224 / CBS 334.59 / QM 7333) (Penicillium marneffei).